The chain runs to 150 residues: Male-specific protein scotti (150 aa).

Residues 60 to 84 (PPMAVFPARGGPNGGPPRLRKKRSF) form a disordered region. N-linked (GlcNAc...) asparagine glycosylation occurs at Asn131.

Belongs to the male-specific scotti family.

Post-meiotically transcribed gene that has a role in late spermiogenesis; required for actin cone progression during spermatid individualization. This Drosophila yakuba (Fruit fly) protein is Male-specific protein scotti.